The following is a 390-amino-acid chain: NADH-quinone oxidoreductase subunit D (390 aa).

It belongs to the complex I 49 kDa subunit family. In terms of assembly, NDH-1 is composed of 14 different subunits. Subunits NuoB, C, D, E, F, and G constitute the peripheral sector of the complex.

The protein resides in the cell inner membrane. It carries out the reaction a quinone + NADH + 5 H(+)(in) = a quinol + NAD(+) + 4 H(+)(out). NDH-1 shuttles electrons from NADH, via FMN and iron-sulfur (Fe-S) centers, to quinones in the respiratory chain. The immediate electron acceptor for the enzyme in this species is believed to be ubiquinone. Couples the redox reaction to proton translocation (for every two electrons transferred, four hydrogen ions are translocated across the cytoplasmic membrane), and thus conserves the redox energy in a proton gradient. The protein is NADH-quinone oxidoreductase subunit D of Geobacter metallireducens (strain ATCC 53774 / DSM 7210 / GS-15).